A 301-amino-acid chain; its full sequence is MASSAKRRAVETGQNPQDSDESSDEGLEDSGDDDSENSEEEVNEEVIVDFEAHTISDNDFHGIKTLLQQLFLKCHVNTSDLTDIIIQQNHIGSVIRQAEVPEDSDDEGDPDEVFGFISMVNLTERQGVECLEKLKDMILDQCVKCSTPDGQERMENLLQGNAQSVGLLLSERFVNVPPQIALPLHKQLQKEMAEAQRTNKPSGKCQFCLMISKTCKPLKKKSISAGDQAKDELLFVNDEEECFYEQATVKFSYCVQDEADSCATGKWSYDDEPMKPFRTVMVIPMDRMDTIMQKMTDYLTV.

The segment at 1–43 is disordered; sequence MASSAKRRAVETGQNPQDSDESSDEGLEDSGDDDSENSEEEVN. A compositionally biased stretch (acidic residues) spans 18-43; that stretch reads DSDESSDEGLEDSGDDDSENSEEEVN.

This sequence belongs to the BCP1 family.

The protein localises to the nucleus. Its subcellular location is the cytoplasm. The protein resides in the cytoskeleton. It is found in the microtubule organizing center. It localises to the centrosome. The protein localises to the centriole. Its subcellular location is the spindle pole. Functionally, during interphase, required for microtubule organizing and anchoring activities. During mitosis, required for the organization and stabilization of the spindle pole. May promote cell cycle arrest and DNA repair. This is Protein BCCIP homolog (bccip) from Danio rerio (Zebrafish).